The chain runs to 658 residues: Carnitine O-palmitoyltransferase 2, mitochondrial (658 aa).

The transit peptide at M1–L25 directs the protein to the mitochondrion. Residues S26–L178 lie on the Mitochondrial matrix side of the membrane. The residue at position 69 (K69) is an N6-succinyllysine. K79 carries the N6-acetyllysine modification. K85 carries the post-translational modification N6-succinyllysine. Positions N179 to N208 form an intramembrane region, note=Mitochondrial inner membrane. Topologically, residues A209 to T658 are mitochondrial matrix. Position 239 is an N6-acetyllysine; alternate (K239). K239 carries the N6-succinyllysine; alternate modification. Catalysis depends on H372, which acts as the Proton acceptor. At K418 the chain carries N6-acetyllysine; alternate. K418 is modified (N6-succinyllysine; alternate). 2 positions are modified to N6-succinyllysine: K424 and K439. G452–D464 is a binding site for CoA. Y486, S488, and T499 together coordinate (R)-carnitine. N6-acetyllysine; alternate is present on K510. K510 is modified (N6-succinyllysine; alternate).

This sequence belongs to the carnitine/choline acetyltransferase family.

Its subcellular location is the mitochondrion inner membrane. It catalyses the reaction (R)-carnitine + hexadecanoyl-CoA = O-hexadecanoyl-(R)-carnitine + CoA. It carries out the reaction octanoyl-CoA + (R)-carnitine = O-octanoyl-(R)-carnitine + CoA. The catalysed reaction is decanoyl-CoA + (R)-carnitine = O-decanoyl-(R)-carnitine + CoA. The enzyme catalyses dodecanoyl-CoA + (R)-carnitine = O-dodecanoyl-R-carnitine + CoA. It catalyses the reaction tetradecanoyl-CoA + (R)-carnitine = O-tetradecanoyl-(R)-carnitine + CoA. It carries out the reaction (R)-carnitine + octadecanoyl-CoA = O-octadecanoyl-(R)-carnitine + CoA. The catalysed reaction is eicosanoyl-CoA + (R)-carnitine = O-eicosanoyl-(R)-carnitine + CoA. The enzyme catalyses (9Z)-tetradecenoyl-CoA + (R)-carnitine = O-(9Z)-tetradecenoyl-(R)-carnitine + CoA. It catalyses the reaction (5Z)-tetradecenoyl-CoA + (R)-carnitine = O-(5Z)-tetradecenoyl-(R)-carnitine + CoA. It carries out the reaction (R)-carnitine + (9Z)-octadecenoyl-CoA = O-(9Z)-octadecenoyl-(R)-carnitine + CoA. The catalysed reaction is 4,8-dimethylnonanoyl-CoA + (R)-carnitine = O-4,8-dimethylnonanoyl-(R)-carnitine + CoA. The protein operates within lipid metabolism; fatty acid beta-oxidation. Functionally, involved in the intramitochondrial synthesis of acylcarnitines from accumulated acyl-CoA metabolites. Reconverts acylcarnitines back into the respective acyl-CoA esters that can then undergo beta-oxidation, an essential step for the mitochondrial uptake of long-chain fatty acids and their subsequent beta-oxidation in the mitochondrion. Active with medium (C8-C12) and long-chain (C14-C18) acyl-CoA esters. This Bos taurus (Bovine) protein is Carnitine O-palmitoyltransferase 2, mitochondrial (CPT2).